Consider the following 405-residue polypeptide: Serpin B12 (405 aa).

Positions 64 to 83 (SQNESKEPDPCLKSNKQKAG) are disordered.

This sequence belongs to the serpin family. Ov-serpin subfamily. In terms of assembly, interacts with SLFN12; as part of a pathway regulating cell differentiation. May interact with USP14. As to expression, expressed in many tissues, including brain, bone marrow, lymph node, heart, lung, liver, pancreas, testis, ovary, and intestine.

Its subcellular location is the cytoplasm. Functionally, inhibits trypsin and plasmin, but not thrombin, coagulation factor Xa, or urokinase-type plasminogen activator. May play a role in cell differentiation. This is Serpin B12 (SERPINB12) from Homo sapiens (Human).